Here is a 230-residue protein sequence, read N- to C-terminus: Ribonuclease 3 (230 aa).

The RNase III domain occupies 5–134 (NDTISKVINY…LIGAIYIDGG (130 aa)). A Mg(2+)-binding site is contributed by Glu-47. Asp-51 is a catalytic residue. 2 residues coordinate Mg(2+): Asn-120 and Glu-123. Glu-123 is a catalytic residue. The DRBM domain maps to 159-228 (DPKTSLQEWT…AELILEKIKK (70 aa)).

The protein belongs to the ribonuclease III family. In terms of assembly, homodimer. The cofactor is Mg(2+).

The protein resides in the cytoplasm. It catalyses the reaction Endonucleolytic cleavage to 5'-phosphomonoester.. In terms of biological role, digests double-stranded RNA. Involved in the processing of primary rRNA transcript to yield the immediate precursors to the large and small rRNAs (23S and 16S). Processes some mRNAs, and tRNAs when they are encoded in the rRNA operon. Processes pre-crRNA and tracrRNA of type II CRISPR loci if present in the organism. The polypeptide is Ribonuclease 3 (Wolbachia pipientis subsp. Culex pipiens (strain wPip)).